The sequence spans 282 residues: NADPH-dependent 7-cyano-7-deazaguanine reductase (282 aa).

Isoleucine 88–serine 90 provides a ligand contact to substrate. Serine 90–lysine 91 serves as a coordination point for NADPH. The active-site Thioimide intermediate is the cysteine 190. Aspartate 197 functions as the Proton donor in the catalytic mechanism. Histidine 229–glutamate 230 is a binding site for substrate. An NADPH-binding site is contributed by arginine 258 to glycine 259.

It belongs to the GTP cyclohydrolase I family. QueF type 2 subfamily. As to quaternary structure, homodimer.

It localises to the cytoplasm. The enzyme catalyses 7-aminomethyl-7-carbaguanine + 2 NADP(+) = 7-cyano-7-deazaguanine + 2 NADPH + 3 H(+). The protein operates within tRNA modification; tRNA-queuosine biosynthesis. Functionally, catalyzes the NADPH-dependent reduction of 7-cyano-7-deazaguanine (preQ0) to 7-aminomethyl-7-deazaguanine (preQ1). The chain is NADPH-dependent 7-cyano-7-deazaguanine reductase from Shigella flexneri serotype 5b (strain 8401).